Consider the following 228-residue polypeptide: Max-interacting protein 1 (228 aa).

Disordered regions lie at residues 29 to 76 and 162 to 228; these read GYAS…NELE and GSTI…SFTS. Basic residues predominate over residues 43 to 56; sequence QHSKPPRRLSRAQK. Over residues 57–70 the composition is skewed to polar residues; the sequence is HSSGSSNTSTANRS. The bHLH domain maps to 67-119; that stretch reads ANRSTHNELEKNRRAHLRLCLERLKVLIPLGPDCTRHTTLGLLNKAKAHIKKL. Positions 173–183 are enriched in acidic residues; sequence EREEIEVDVES. The span at 216 to 228 shows a compositional bias: polar residues; sequence GYSSASVKLSFTS.

In terms of assembly, efficient DNA binding requires dimerization with another bHLH protein. Binds DNA as a heterodimer with MAX. Interacts with SMC3. Interacts with RNF17.

Its subcellular location is the nucleus. Transcriptional repressor. MXI1 binds with MAX to form a sequence-specific DNA-binding protein complex which recognizes the core sequence 5'-CAC[GA]TG-3'. MXI1 thus antagonizes MYC transcriptional activity by competing for MAX. The protein is Max-interacting protein 1 (Mxi1) of Rattus norvegicus (Rat).